We begin with the raw amino-acid sequence, 369 residues long: Transcription factor GTE6 (369 aa).

Positions 89-198 (KRMQDLMRQF…EKFEEKWAHF (110 aa)) constitute a Bromo domain. Residues 201–263 (KVQEEEKIRE…VERCRKITIE (63 aa)) are a coiled coil. The NET domain maps to 250–331 (MRKVVERCRK…DALDNAMKKK (82 aa)). The span at 329 to 348 (KKKKEEETKTRELSGAQKKE) shows a compositional bias: basic and acidic residues. The disordered stretch occupies residues 329–369 (KKKKEEETKTRELSGAQKKEVSKKRNATTKLAERKTKRSRI). The short motif at 351-368 (KKRNATTKLAERKTKRSR) is the Bipartite nuclear localization signal element.

In terms of tissue distribution, abundantly expressed in flowers. Weakly expressed in roots, leaves and siliques; and undetectable in 5-day-old seedlings. In the basal rosette leaves of 21-day-old plants, it is more abundant in leaves 6 and 7, which possess narrow elliptical laminae, than in leaves 1-4, which have round laminae, suggesting a possible correlation between its expression and the formation of elliptical leaf laminae in mature leaves.

The protein resides in the nucleus. In terms of biological role, regulates differences in leaf patterning between juvenile and mature leaves by controlling differences in the development of primordia produced during juvenile and mature phases. Acts by activating transcription of the myb-domain protein AS1, a gene involved in leaf-axis specification. Associates with the promoter and the start of the transcribed region of AS1 and up-regulates expression of AS1 through acetylation of histones H3 and H4. This Arabidopsis thaliana (Mouse-ear cress) protein is Transcription factor GTE6 (GTE6).